The following is a 228-amino-acid chain: NOI-like protein (228 aa).

Over residues 56-75 the composition is skewed to basic and acidic residues; it reads AQDHQHSEKHHNDTSTDYHV. Disordered stretches follow at residues 56–87 and 99–133; these read AQDH…HRRE and RPHR…RNSD. Residues 76-86 are compositionally biased toward basic residues; sequence VKQHRRKHHRR. The segment covering 118-133 has biased composition (polar residues); it reads HGTSATMSSSVKRNSD.

It belongs to the RIN4 family.

This chain is NOI-like protein, found in Elaeis oleifera (American oil palm).